Consider the following 295-residue polypeptide: Alpha-soluble NSF attachment protein (295 aa).

N-acetylmethionine is present on M1. A phosphoserine mark is found at S26, S29, and S195.

The protein belongs to the SNAP family. In terms of assembly, interacts with PRKCABP, and disrupts the interaction between GRIA2 and PRKCABP, leading to the internalization of GRIA2. Found in a complex with VAMP8. Component of a SNARE-like complex that contains at least ZW10, USE1L, RINT1, STX18 and NAPA/SNAP-alpha. Interacts with VTI1A. Interacts with STX12. Interacts with GNA12 (via N-terminus); the interaction promotes CDH5 localization to plasma membrane.

It is found in the cell membrane. In terms of biological role, required for vesicular transport between the endoplasmic reticulum and the Golgi apparatus. Together with GNA12 promotes CDH5 localization to plasma membrane. The polypeptide is Alpha-soluble NSF attachment protein (Napa) (Mus musculus (Mouse)).